The primary structure comprises 369 residues: Superinfection exclusion protein (369 aa).

The first 15 residues, 1–15 (MIALLILSLTCSVST), serve as a signal peptide directing secretion.

This sequence belongs to the serpin family. Orthopoxvirus OPG040 subfamily. In terms of assembly, interacts with OPG185/A56 protein.

The protein resides in the virion membrane. It is found in the host cell membrane. Its function is as follows. Negatively regulates superinfection and syncytium formation in infected host cells. Acts in concert with OPG185/A56 protein at the host cell membrane by interacting with and inhibiting the mature virion entry/fusion complex (EFC). This mechanism ensures that new virions released from the cell cannot enter already infected cells. This Vaccinia virus (strain Western Reserve) (VACV) protein is Superinfection exclusion protein (OPG040).